The primary structure comprises 246 residues: UPF0736 protein GK0808 (246 aa).

This sequence belongs to the UPF0736 family.

This Geobacillus kaustophilus (strain HTA426) protein is UPF0736 protein GK0808.